The primary structure comprises 98 residues: Integration host factor subunit alpha (98 aa).

The segment at 49–71 (FGNFDLRDKNQRPGRNPKTGEDI) is disordered.

It belongs to the bacterial histone-like protein family. In terms of assembly, heterodimer of an alpha and a beta chain.

In terms of biological role, this protein is one of the two subunits of integration host factor, a specific DNA-binding protein that functions in genetic recombination as well as in transcriptional and translational control. This Shewanella sp. (strain MR-4) protein is Integration host factor subunit alpha.